The chain runs to 359 residues: Membrane-bound lytic murein transglycosylase C (359 aa).

The first 16 residues, 1–16, serve as a signal peptide directing secretion; sequence MKKYLALALIAPLLIS. Residue C17 is the site of N-palmitoyl cysteine attachment. A lipid anchor (S-diacylglycerol cysteine) is attached at C17.

It belongs to the transglycosylase Slt family.

The protein localises to the cell outer membrane. It catalyses the reaction Exolytic cleavage of the (1-&gt;4)-beta-glycosidic linkage between N-acetylmuramic acid (MurNAc) and N-acetylglucosamine (GlcNAc) residues in peptidoglycan, from either the reducing or the non-reducing ends of the peptidoglycan chains, with concomitant formation of a 1,6-anhydrobond in the MurNAc residue.. Its function is as follows. Murein-degrading enzyme. May play a role in recycling of muropeptides during cell elongation and/or cell division. The sequence is that of Membrane-bound lytic murein transglycosylase C from Escherichia coli O139:H28 (strain E24377A / ETEC).